The following is a 693-amino-acid chain: Glycine--tRNA ligase beta subunit (693 aa).

This sequence belongs to the class-II aminoacyl-tRNA synthetase family. Tetramer of two alpha and two beta subunits.

The protein localises to the cytoplasm. The enzyme catalyses tRNA(Gly) + glycine + ATP = glycyl-tRNA(Gly) + AMP + diphosphate. The protein is Glycine--tRNA ligase beta subunit of Vibrio vulnificus (strain YJ016).